We begin with the raw amino-acid sequence, 398 residues long: 1-deoxy-D-xylulose 5-phosphate reductoisomerase (398 aa).

8 residues coordinate NADPH: Thr10, Gly11, Ser12, Ile13, Gly36, Lys37, Asn38, and Asn124. Lys125 provides a ligand contact to 1-deoxy-D-xylulose 5-phosphate. Glu126 contributes to the NADPH binding site. Asp150 is a binding site for Mn(2+). Residues Ser151, Glu152, Ser186, and His209 each coordinate 1-deoxy-D-xylulose 5-phosphate. Glu152 is a binding site for Mn(2+). Position 215 (Gly215) interacts with NADPH. The 1-deoxy-D-xylulose 5-phosphate site is built by Ser222, Asn227, Lys228, and Glu231. Glu231 provides a ligand contact to Mn(2+).

This sequence belongs to the DXR family. Homodimer. Mg(2+) is required as a cofactor. The cofactor is Mn(2+).

It carries out the reaction 2-C-methyl-D-erythritol 4-phosphate + NADP(+) = 1-deoxy-D-xylulose 5-phosphate + NADPH + H(+). The protein operates within isoprenoid biosynthesis; isopentenyl diphosphate biosynthesis via DXP pathway; isopentenyl diphosphate from 1-deoxy-D-xylulose 5-phosphate: step 1/6. Its function is as follows. Catalyzes the NADPH-dependent rearrangement and reduction of 1-deoxy-D-xylulose-5-phosphate (DXP) to 2-C-methyl-D-erythritol 4-phosphate (MEP). The chain is 1-deoxy-D-xylulose 5-phosphate reductoisomerase from Salmonella choleraesuis (strain SC-B67).